Here is a 334-residue protein sequence, read N- to C-terminus: MDVSRIRFFRLMTGDFAHGISIPEKVAEIFSGQITKGFNLKSPSGETWRVGVAKVADELILKSGWEDFAKAHELQENDLLFFTCNGHGNGSCSFDVLIFDASGCEKVSCFFTGKKNSYMCKNFNSIGGQVAGQYLSSDSEDTSTPSVLIGSPHKASTSKKLSGKTKTNPRKEPEDPNCSHWHVIEEKNTDDDEHADYHYTRFANYLTGEERDEIFSLVSLQPGNPVFVVVLQTAHVRRRNILIVPTRFAADHLERKSHDILLIRPNRKQKWSVKYYYLSNTTRGFNCHRWIKFIRENRLREGNVCIFELMKGARRPTMTVHVIGKADNRFVLLG.

Positions 5-102 (RIRFFRLMTG…SFDVLIFDAS (98 aa)) form a DNA-binding region, TF-B3 1. Positions 142-178 (TSTPSVLIGSPHKASTSKKLSGKTKTNPRKEPEDPNC) are disordered. Residues 154–166 (KASTSKKLSGKTK) show a composition bias toward low complexity. Positions 227–326 (FVVVLQTAHV…TMTVHVIGKA (100 aa)) form a DNA-binding region, TF-B3 2.

It localises to the nucleus. The polypeptide is B3 domain-containing protein LOC_Os12g40090 (Oryza sativa subsp. japonica (Rice)).